The sequence spans 325 residues: Dehydrogenase/reductase SDR family member 7B (325 aa).

The Cytoplasmic portion of the chain corresponds to 1 to 17; the sequence is MISPSSRKGMLKERAMD. The helical; Signal-anchor for type II membrane protein transmembrane segment at 18–38 threads the bilayer; sequence LVTQTTILPLLFGCLGIFSLF. Over 39–325 the chain is Lumenal; it reads RLLQRTRSKA…ARKERKSKNS (287 aa). Positions 62 and 64 each coordinate NAD(+). Ser194 serves as a coordination point for substrate. Residues Tyr207, Lys211, and Thr242 each contribute to the NAD(+) site. The active-site Proton acceptor is the Tyr207.

It belongs to the short-chain dehydrogenases/reductases (SDR) family.

The protein localises to the endoplasmic reticulum membrane. Functionally, putative oxidoreductase. The protein is Dehydrogenase/reductase SDR family member 7B (Dhrs7b) of Rattus norvegicus (Rat).